Here is a 235-residue protein sequence, read N- to C-terminus: Phosphoribosylaminoimidazole-succinocarboxamide synthase (235 aa).

It belongs to the SAICAR synthetase family.

It catalyses the reaction 5-amino-1-(5-phospho-D-ribosyl)imidazole-4-carboxylate + L-aspartate + ATP = (2S)-2-[5-amino-1-(5-phospho-beta-D-ribosyl)imidazole-4-carboxamido]succinate + ADP + phosphate + 2 H(+). It functions in the pathway purine metabolism; IMP biosynthesis via de novo pathway; 5-amino-1-(5-phospho-D-ribosyl)imidazole-4-carboxamide from 5-amino-1-(5-phospho-D-ribosyl)imidazole-4-carboxylate: step 1/2. The chain is Phosphoribosylaminoimidazole-succinocarboxamide synthase from Chloroherpeton thalassium (strain ATCC 35110 / GB-78).